A 327-amino-acid polypeptide reads, in one-letter code: 4-hydroxy-2-oxoglutarate aldolase, mitochondrial (327 aa).

The N-terminal 25 residues, 1-25, are a transit peptide targeting the mitochondrion; the sequence is MLVPRVWSSVRLGLSRVLSRTLRGW. 77–78 provides a ligand contact to substrate; the sequence is SN. The active-site Schiff-base intermediate with substrate is K196. Residues S198 and G222 each contribute to the substrate site.

It belongs to the DapA family. As to quaternary structure, homotetramer.

It is found in the mitochondrion. It catalyses the reaction (4S)-4-hydroxy-2-oxoglutarate = glyoxylate + pyruvate. The catalysed reaction is (4R)-4-hydroxy-2-oxoglutarate = glyoxylate + pyruvate. With respect to regulation, inhibited by divalent cations. In terms of biological role, catalyzes the final step in the metabolic pathway of hydroxyproline. This is 4-hydroxy-2-oxoglutarate aldolase, mitochondrial (HOGA1) from Bos taurus (Bovine).